Reading from the N-terminus, the 297-residue chain is 1D-myo-inositol 2-acetamido-2-deoxy-alpha-D-glucopyranoside deacetylase (297 aa).

Zn(2+)-binding residues include histidine 11, aspartate 14, and histidine 154.

It belongs to the MshB deacetylase family. The cofactor is Zn(2+).

The enzyme catalyses 1D-myo-inositol 2-acetamido-2-deoxy-alpha-D-glucopyranoside + H2O = 1D-myo-inositol 2-amino-2-deoxy-alpha-D-glucopyranoside + acetate. Its function is as follows. Catalyzes the deacetylation of 1D-myo-inositol 2-acetamido-2-deoxy-alpha-D-glucopyranoside (GlcNAc-Ins) in the mycothiol biosynthesis pathway. In Tsukamurella paurometabola (strain ATCC 8368 / DSM 20162 / CCUG 35730 / CIP 100753 / JCM 10117 / KCTC 9821 / NBRC 16120 / NCIMB 702349 / NCTC 13040) (Corynebacterium paurometabolum), this protein is 1D-myo-inositol 2-acetamido-2-deoxy-alpha-D-glucopyranoside deacetylase.